The chain runs to 427 residues: UDP-N-acetylglucosamine 1-carboxyvinyltransferase (427 aa).

22-23 (KN) contacts phosphoenolpyruvate. A UDP-N-acetyl-alpha-D-glucosamine-binding site is contributed by R92. D116 functions as the Proton donor in the catalytic mechanism. 2 residues coordinate UDP-N-acetyl-alpha-D-glucosamine: D312 and M334.

The protein belongs to the EPSP synthase family. MurA subfamily.

The protein localises to the cytoplasm. The enzyme catalyses phosphoenolpyruvate + UDP-N-acetyl-alpha-D-glucosamine = UDP-N-acetyl-3-O-(1-carboxyvinyl)-alpha-D-glucosamine + phosphate. The protein operates within cell wall biogenesis; peptidoglycan biosynthesis. Its function is as follows. Cell wall formation. Adds enolpyruvyl to UDP-N-acetylglucosamine. The sequence is that of UDP-N-acetylglucosamine 1-carboxyvinyltransferase from Borrelia garinii subsp. bavariensis (strain ATCC BAA-2496 / DSM 23469 / PBi) (Borreliella bavariensis).